The following is a 503-amino-acid chain: Maturase K (503 aa).

The protein belongs to the intron maturase 2 family. MatK subfamily.

It is found in the plastid. Its subcellular location is the chloroplast. In terms of biological role, usually encoded in the trnK tRNA gene intron. Probably assists in splicing its own and other chloroplast group II introns. The sequence is that of Maturase K from Liquidambar orientalis (Oriental sweet gum).